The following is a 435-amino-acid chain: Type A flavoprotein fprA (435 aa).

Residues 48-228 form a zinc metallo-hydrolase region; sequence ANGTTYNAYA…PFRSFVAQAL (181 aa). Positions 98, 100, 102, 167, 186, and 243 each coordinate Fe cation. Residues 276–415 enclose the Flavodoxin-like domain; the sequence is LLIFYVSAYG…EGRAFGRRLA (140 aa).

This sequence in the N-terminal section; belongs to the zinc metallo-hydrolase group 3 family. As to quaternary structure, homodimer. FMN serves as cofactor. The cofactor is Fe cation.

Its function is as follows. Low-potential electron donor to a number of redox enzymes. This chain is Type A flavoprotein fprA (fprA), found in Rhodobacter capsulatus (strain ATCC BAA-309 / NBRC 16581 / SB1003).